The sequence spans 223 residues: Urease accessory protein UreG (223 aa).

The interval 1–31 (MAKHSHDHTHDHHDRPRRVRKPGEPLRIGVG) is disordered. 32–39 (GPVGSGKT) contacts GTP.

Belongs to the SIMIBI class G3E GTPase family. UreG subfamily. In terms of assembly, homodimer. UreD, UreF and UreG form a complex that acts as a GTP-hydrolysis-dependent molecular chaperone, activating the urease apoprotein by helping to assemble the nickel containing metallocenter of UreC. The UreE protein probably delivers the nickel.

The protein resides in the cytoplasm. Facilitates the functional incorporation of the urease nickel metallocenter. This process requires GTP hydrolysis, probably effectuated by UreG. This is Urease accessory protein UreG from Mycobacterium marinum (strain ATCC BAA-535 / M).